A 572-amino-acid polypeptide reads, in one-letter code: Potassium-transporting ATPase potassium-binding subunit (572 aa).

11 helical membrane passes run 5 to 25 (LAAG…YVPL), 71 to 91 (VGYT…LYVL), 97 to 117 (VLPL…NTAV), 142 to 162 (GLAV…VALI), 188 to 208 (ILLP…TIQS), 258 to 278 (PTPL…VCLT), 292 to 312 (LTVL…VTWA), 387 to 407 (GLYG…LLVG), 422 to 442 (ITMA…GTGI), 500 to 520 (LGMA…ALAG), and 548 to 568 (GTVL…GPIA).

It belongs to the KdpA family. As to quaternary structure, the system is composed of three essential subunits: KdpA, KdpB and KdpC.

The protein localises to the cell membrane. Functionally, part of the high-affinity ATP-driven potassium transport (or Kdp) system, which catalyzes the hydrolysis of ATP coupled with the electrogenic transport of potassium into the cytoplasm. This subunit binds the extracellular potassium ions and delivers the ions to the membrane domain of KdpB through an intramembrane tunnel. This Mycobacteroides abscessus (strain ATCC 19977 / DSM 44196 / CCUG 20993 / CIP 104536 / JCM 13569 / NCTC 13031 / TMC 1543 / L948) (Mycobacterium abscessus) protein is Potassium-transporting ATPase potassium-binding subunit.